The sequence spans 101 residues: Pro-corazonin (101 aa).

The signal sequence occupies residues 1-19 (MVTNITLILTLMTLASVTA). Q20 is modified (pyrrolidone carboxylic acid). At N30 the chain carries Asparagine amide.

It belongs to the corazonin family.

Its subcellular location is the secreted. In terms of biological role, cardioactive peptide. Corazonin is probably involved in the physiological regulation of the heart beat. The sequence is that of Pro-corazonin (crz) from Bombyx mori (Silk moth).